Here is a 552-residue protein sequence, read N- to C-terminus: Hyaluronan synthase 2 (552 aa).

The Cytoplasmic segment spans residues 1 to 11 (MHCERFLCVLR). A helical transmembrane segment spans residues 12–32 (IIGTTLFGVSLLLGITAAYIV). Residues 33–45 (GYQFIQTDNYYFS) are Extracellular-facing. The chain crosses the membrane as a helical span at residues 46 to 66 (FGLYGAFLASHLIIQSLFAFL). Topologically, residues 67 to 374 (EHRKMKKSLE…NAMWFHKHHL (308 aa)) are cytoplasmic. T110 carries the post-translational modification Phosphothreonine. K190 participates in a covalent cross-link: Glycyl lysine isopeptide (Lys-Gly) (interchain with G-Cter in ubiquitin). The O-linked (GlcNAc) serine glycan is linked to S221. The residue at position 328 (T328) is a Phosphothreonine. A helical membrane pass occupies residues 375 to 395 (WMTYEAVITGFFPFFLIATVI). Residues 396 to 402 (QLFYRGK) lie on the Extracellular side of the membrane. A helical transmembrane segment spans residues 403–423 (IWNILLFLLTVQLVGLIKSSF). Topologically, residues 424–429 (ASCLRG) are cytoplasmic. A helical membrane pass occupies residues 430 to 450 (NIVMVFMSLYSVLYMSSLLPA). The Extracellular segment spans residues 451-475 (KMFAIATINKAGWGTSGRKTIVVNF). A helical membrane pass occupies residues 476–496 (IGLIPVSVWFTILLGGVIFTI). Over 497–510 (YKESKKPFSESKQT) the chain is Cytoplasmic. Residues 511–531 (VLIVGTLIYACYWVMLLTLYV) form a helical membrane-spanning segment. Residues 532-552 (VLINKCGRRKKGQQYDMVLDV) lie on the Extracellular side of the membrane.

It belongs to the NodC/HAS family. Homodimer; dimerization promotes enzymatic activity. Forms heterodimer with HAS3. Forms heterodimer with HAS1. It depends on Mg(2+) as a cofactor. Phosphorylation at Thr-328 is essential for hyaluronan synthase activity. In terms of processing, O-GlcNAcylation at Ser-221 increases the stability of HAS2 and plasma membrane localization. Post-translationally, ubiquitination at Lys-190; this ubiquitination is essential for hyaluronan synthase activity and homo- or hetero-oligomerization. Can also be poly-ubiquitinated. Deubiquitinated by USP17L22/USP17 and USP4. USP17L22/USP17 efficiently removes 'Lys-63'- and 'Lys-48'-linked polyubiquitin chains, whereas USP4 preferentially removes monoubiquitination and, partially, both 'Lys-63'- and 'Lys-48'-linked polyubiquitin chain. In terms of tissue distribution, expressed in heart, brain, spleen, lung and skeletal muscle.

Its subcellular location is the cell membrane. The protein resides in the endoplasmic reticulum membrane. It is found in the vesicle. It localises to the golgi apparatus membrane. The protein localises to the lysosome. It carries out the reaction [hyaluronan](n) + UDP-N-acetyl-alpha-D-glucosamine = N-acetyl-beta-D-glucosaminyl-(1-&gt;4)-[hyaluronan](n) + UDP + H(+). The catalysed reaction is N-acetyl-beta-D-glucosaminyl-(1-&gt;4)-[hyaluronan](n) + UDP-alpha-D-glucuronate = [hyaluronan](n+1) + UDP + H(+). It participates in glycan biosynthesis; hyaluronan biosynthesis. Its function is as follows. Catalyzes the addition of GlcNAc or GlcUA monosaccharides to the nascent hyaluronan polymer. Therefore, it is essential to hyaluronan synthesis a major component of most extracellular matrices that has a structural role in tissues architectures and regulates cell adhesion, migration and differentiation. This is one of the isozymes catalyzing that reaction and it is particularly responsible for the synthesis of high molecular mass hyaluronan. Required for the transition of endocardial cushion cells into mesenchymal cells, a process crucial for heart development. May also play a role in vasculogenesis. High molecular mass hyaluronan also play a role in early contact inhibition a process which stops cell growth when cells come into contact with each other or the extracellular matrix. Functionally, catalyzes the addition of GlcNAc or GlcUA monosaccharides to the nascent hyaluronan polymer. Therefore, it is essential to hyaluronan synthesis a major component of most extracellular matrices that has a structural role in tissues architectures and regulates cell adhesion, migration and differentiation. This is one of three isoenzymes responsible for cellular hyaluronan synthesis and it is particularly responsible for the synthesis of high molecular mass hyaluronan. The polypeptide is Hyaluronan synthase 2 (Mus musculus (Mouse)).